The following is a 323-amino-acid chain: Acetylglutamate kinase (323 aa).

Substrate is bound by residues 90–91 (GG), arginine 112, and asparagine 218.

This sequence belongs to the acetylglutamate kinase family. ArgB subfamily.

The protein resides in the cytoplasm. It carries out the reaction N-acetyl-L-glutamate + ATP = N-acetyl-L-glutamyl 5-phosphate + ADP. Its pathway is amino-acid biosynthesis; L-arginine biosynthesis; N(2)-acetyl-L-ornithine from L-glutamate: step 2/4. Catalyzes the ATP-dependent phosphorylation of N-acetyl-L-glutamate. This chain is Acetylglutamate kinase, found in Ehrlichia canis (strain Jake).